The chain runs to 176 residues: Retinol-binding protein 4-A (176 aa).

An N-acetylserine modification is found at serine 1. Cystine bridges form between cysteine 3-cysteine 159, cysteine 69-cysteine 173, and cysteine 119-cysteine 128. Glutamine 97 is a substrate binding site.

The protein belongs to the calycin superfamily. Lipocalin family.

The protein resides in the secreted. Its function is as follows. RBP delivers retinol from the liver stores to the peripheral tissues. In plasma, the RBP-retinol complex interacts with transthyretin, this prevents its loss by filtration through the kidney glomeruli. This Oncorhynchus mykiss (Rainbow trout) protein is Retinol-binding protein 4-A (rbp4a).